Consider the following 241-residue polypeptide: General transcription factor IIF subunit 2 (241 aa).

This sequence belongs to the TFIIF beta subunit family. Heterodimer of an alpha and a beta subunit.

The protein localises to the nucleus. TFIIF is a general transcription initiation factor that binds to RNA polymerase II and helps to recruit it to the initiation complex in collaboration with TFIIB. This chain is General transcription factor IIF subunit 2 (gtf2f2), found in Dictyostelium discoideum (Social amoeba).